A 307-amino-acid chain; its full sequence is Ras-related protein RabR (307 aa).

A compositionally biased stretch (polar residues) spans 1–10 (MTTTTLLSES). A disordered region spans residues 1-45 (MTTTTLLSESTNNSNNTNNNTNNNTNNTMNNNNNNNNNNTIGNNN). A compositionally biased stretch (low complexity) spans 11–45 (TNNSNNTNNNTNNNTNNTMNNNNNNNNNNTIGNNN). A GTP-binding site is contributed by 61-68 (GDEEVGKG). Residues 83–92 (ENLYNIEVDR) carry the Effector region motif. 122–126 (NFHMH) lines the GTP pocket. Residues 175–185 (NFNCQSNSRNS) are compositionally biased toward low complexity. The tract at residues 175-223 (NFNCQSNSRNSTNYNRHSVGNHCPNSPQKGEKENNTHSSTAPPAPPPLP) is disordered. The segment covering 186–202 (TNYNRHSVGNHCPNSPQ) has biased composition (polar residues). Position 230 to 233 (230 to 233 (NKCD)) interacts with GTP. The residue at position 304 (C304) is a Cysteine methyl ester. The S-geranylgeranyl cysteine moiety is linked to residue C304. Residues 305–307 (NLM) constitute a propeptide, removed in mature form.

The protein belongs to the small GTPase superfamily. Rab family.

Its subcellular location is the cell membrane. In Dictyostelium discoideum (Social amoeba), this protein is Ras-related protein RabR (rabR).